We begin with the raw amino-acid sequence, 177 residues long: Large ribosomal subunit protein uL6 (177 aa).

Belongs to the universal ribosomal protein uL6 family. Part of the 50S ribosomal subunit.

Its function is as follows. This protein binds to the 23S rRNA, and is important in its secondary structure. It is located near the subunit interface in the base of the L7/L12 stalk, and near the tRNA binding site of the peptidyltransferase center. The sequence is that of Large ribosomal subunit protein uL6 from Pasteurella multocida (strain Pm70).